The chain runs to 257 residues: uncharacterized protein (257 aa).

An N-terminal signal peptide occupies residues 1-22 (MRYLKRLSWYISILILIVVIAG). Cys-23 carries the N-palmitoyl cysteine lipid modification. Cys-23 carries the S-diacylglycerol cysteine lipid modification.

This sequence belongs to the staphylococcal tandem lipoprotein family.

The protein localises to the cell membrane. This is an uncharacterized protein from Staphylococcus aureus (strain N315).